Reading from the N-terminus, the 362-residue chain is CLIP domain-containing serine protease B10 (362 aa).

Positions Met1–Gly19 are cleaved as a signal peptide. One can recognise a Clip domain in the interval Ala22–Cys75. 3 cysteine pairs are disulfide-bonded: Cys23/Cys74, Cys33/Cys66, and Cys39/Cys75. Positions Ile110–Arg361 constitute a Peptidase S1 domain. A glycan (N-linked (GlcNAc...) asparagine) is linked at Asn114. An intrachain disulfide couples Cys140 to Cys156. Active-site charge relay system residues include His155 and Asp220. Residue Asn254 is glycosylated (N-linked (GlcNAc...) asparagine). 2 cysteine pairs are disulfide-bonded: Cys285–Cys300 and Cys310–Cys337. The active-site Charge relay system is Ser314.

The protein belongs to the peptidase S1 family. CLIP subfamily. As to quaternary structure, forms a covalent heterodimer with SRPN2; the interaction inhibits CLIPB10 catalytic activity. Post-translationally, cleaved by an unknown protease into an active form.

The protein localises to the secreted. Inhibited by serpin SRPN2. In terms of biological role, serine protease which preferentially cleaves after arginine residues. Involved in the innate immune response against parasite P.bergei infection by activating the melanization cascade. Probably in the hemolymph, cleaves and activates prophenoloxidase (PPO), which functions in the formation of pigments such as melanin and other polyphenolic compounds. In the susceptible strain G3, appears to be dispensable for ookinete elimination which occurs by lysis. This Anopheles gambiae (African malaria mosquito) protein is CLIP domain-containing serine protease B10.